The following is a 327-amino-acid chain: MDRNEKQALWNAVHGGGAIDEHTAVSVLGASHGELAEILHAAHTMTMRRFGREVSLCSIANVRSGNCSEDCTFCAQSSHFKGTPAPAYPLMSVEEIRDCAEKAGQSPLEFFSYVTSGRALKGKSLDHVCEAVDGMRERSFNHCASLGCLDFESLKKLHESGVVRYHHNLEAAESYFPNVCTTHSYEERVRTVRDAKKAGLEVCCGGLLGLGESHQQRVELALALAELEVDSIPLNFLIPIPGTPLENVEPLQPLEILLTIAMFRLVNPHAEVRMAAGRAALRSLQSFIFHAGCNGLMVGDFLTVSGQGIDHDLTMLEDLGLTVRTKK.

One can recognise a Radical SAM core domain in the interval 49-275; it reads RFGREVSLCS…VNPHAEVRMA (227 aa). Residues cysteine 67, cysteine 71, and cysteine 74 each coordinate [4Fe-4S] cluster. [2Fe-2S] cluster is bound by residues serine 112, cysteine 143, cysteine 203, and arginine 273.

The protein belongs to the radical SAM superfamily. Biotin synthase family. As to quaternary structure, homodimer. [4Fe-4S] cluster is required as a cofactor. Requires [2Fe-2S] cluster as cofactor.

The catalysed reaction is (4R,5S)-dethiobiotin + (sulfur carrier)-SH + 2 reduced [2Fe-2S]-[ferredoxin] + 2 S-adenosyl-L-methionine = (sulfur carrier)-H + biotin + 2 5'-deoxyadenosine + 2 L-methionine + 2 oxidized [2Fe-2S]-[ferredoxin]. It participates in cofactor biosynthesis; biotin biosynthesis; biotin from 7,8-diaminononanoate: step 2/2. In terms of biological role, catalyzes the conversion of dethiobiotin (DTB) to biotin by the insertion of a sulfur atom into dethiobiotin via a radical-based mechanism. This chain is Biotin synthase, found in Maridesulfovibrio salexigens (strain ATCC 14822 / DSM 2638 / NCIMB 8403 / VKM B-1763) (Desulfovibrio salexigens).